The chain runs to 179 residues: ATP synthase subunit delta (179 aa).

It belongs to the ATPase delta chain family. As to quaternary structure, F-type ATPases have 2 components, F(1) - the catalytic core - and F(0) - the membrane proton channel. F(1) has five subunits: alpha(3), beta(3), gamma(1), delta(1), epsilon(1). F(0) has three main subunits: a(1), b(2) and c(10-14). The alpha and beta chains form an alternating ring which encloses part of the gamma chain. F(1) is attached to F(0) by a central stalk formed by the gamma and epsilon chains, while a peripheral stalk is formed by the delta and b chains.

The protein resides in the cell membrane. F(1)F(0) ATP synthase produces ATP from ADP in the presence of a proton or sodium gradient. F-type ATPases consist of two structural domains, F(1) containing the extramembraneous catalytic core and F(0) containing the membrane proton channel, linked together by a central stalk and a peripheral stalk. During catalysis, ATP synthesis in the catalytic domain of F(1) is coupled via a rotary mechanism of the central stalk subunits to proton translocation. In terms of biological role, this protein is part of the stalk that links CF(0) to CF(1). It either transmits conformational changes from CF(0) to CF(1) or is implicated in proton conduction. In Staphylococcus epidermidis (strain ATCC 35984 / DSM 28319 / BCRC 17069 / CCUG 31568 / BM 3577 / RP62A), this protein is ATP synthase subunit delta.